The chain runs to 379 residues: MTISDVPTQTLPAEGEIGLIDVGSLQLESGAVIDDVCIAVQRWGKLSPARDNVVVVLHALTGDSHITGPAGPGHPTPGWWDGVAGPSAPIDTTRWCAVATNVLGGCRGSTGPSSLARDGKPWGSRFPLISIRDQVQADVAALAALGITEVAAVVGGSMGGARALEWVVGYPDRVRAGLLLAVGARATADQIGTQTTQIAAIKADPDWQSGDYHETGRAPDAGLRLARRFAHLTYRGEIELDTRFANHNQGNEDPTAGGRYAVQSYLEHQGDKLLSRFDAGSYVILTEALNSHDVGRGRGGVSAALRACPVPVVVGGITSDRLYPLRLQQELADLLPGCAGLRVVESVYGHDGFLVETEAVGELIRQTLGLADREGACRR.

Residues 52–356 (NVVVVLHALT…VYGHDGFLVE (305 aa)) enclose the AB hydrolase-1 domain. Serine 157 functions as the Nucleophile in the catalytic mechanism. Arginine 227 lines the substrate pocket. Catalysis depends on residues aspartate 320 and histidine 350. Position 351 (aspartate 351) interacts with substrate.

The protein belongs to the AB hydrolase superfamily. MetX family. In terms of assembly, homodimer.

It is found in the cytoplasm. The catalysed reaction is L-homoserine + acetyl-CoA = O-acetyl-L-homoserine + CoA. It functions in the pathway amino-acid biosynthesis; L-methionine biosynthesis via de novo pathway; O-acetyl-L-homoserine from L-homoserine: step 1/1. Functionally, transfers an acetyl group from acetyl-CoA to L-homoserine, forming acetyl-L-homoserine. In Mycobacterium tuberculosis (strain CDC 1551 / Oshkosh), this protein is Homoserine O-acetyltransferase.